A 150-amino-acid polypeptide reads, in one-letter code: Seminal ribonuclease (150 aa).

The N-terminal stretch at 1-26 is a signal peptide; it reads MALKSLVVLPLLVLVLLLVRVQPSLG. Positions 33 and 36 each coordinate substrate. Catalysis depends on H38, which acts as the Proton acceptor. 4 disulfides stabilise this stretch: C52–C110, C66–C121, C84–C136, and C91–C98. Substrate contacts are provided by residues 67 to 71 and K92; that span reads KPVNT. N93 carries the deamidated asparagine; by deterioration modification. R111 serves as a coordination point for substrate. The active-site Proton donor is the H145.

This sequence belongs to the pancreatic ribonuclease family. In terms of assembly, homodimer; disulfide-linked. Seminal plasma. Can reach 3% of the protein content of this fluid.

The protein localises to the secreted. The enzyme catalyses an [RNA] containing cytidine + H2O = an [RNA]-3'-cytidine-3'-phosphate + a 5'-hydroxy-ribonucleotide-3'-[RNA].. The catalysed reaction is an [RNA] containing uridine + H2O = an [RNA]-3'-uridine-3'-phosphate + a 5'-hydroxy-ribonucleotide-3'-[RNA].. With respect to regulation, allosteric regulation by both substrate and reaction products. This enzyme hydrolyzes both single- and double-stranded RNA. This chain is Seminal ribonuclease (SRN), found in Bos taurus (Bovine).